A 92-amino-acid chain; its full sequence is Large ribosomal subunit protein bL28 (92 aa).

Belongs to the bacterial ribosomal protein bL28 family.

In Borreliella burgdorferi (strain ATCC 35210 / DSM 4680 / CIP 102532 / B31) (Borrelia burgdorferi), this protein is Large ribosomal subunit protein bL28.